A 187-amino-acid polypeptide reads, in one-letter code: Large ribosomal subunit protein uL5 (187 aa).

This sequence belongs to the universal ribosomal protein uL5 family. Part of the 50S ribosomal subunit; part of the 5S rRNA/L5/L18/L25 subcomplex. Contacts the 5S rRNA and the P site tRNA. Forms a bridge to the 30S subunit in the 70S ribosome.

Functionally, this is one of the proteins that bind and probably mediate the attachment of the 5S RNA into the large ribosomal subunit, where it forms part of the central protuberance. In the 70S ribosome it contacts protein S13 of the 30S subunit (bridge B1b), connecting the 2 subunits; this bridge is implicated in subunit movement. Contacts the P site tRNA; the 5S rRNA and some of its associated proteins might help stabilize positioning of ribosome-bound tRNAs. The chain is Large ribosomal subunit protein uL5 from Roseobacter denitrificans (strain ATCC 33942 / OCh 114) (Erythrobacter sp. (strain OCh 114)).